A 473-amino-acid polypeptide reads, in one-letter code: Nitrogenase vanadium-iron protein alpha chain (473 aa).

C49, C74, and C137 together coordinate [8Fe-7S] cluster. The [7Fe-V-9S-C-homocitryl] cluster site is built by C256 and H422.

The protein belongs to the NifD/NifK/NifE/NifN family. Hexamer of two alpha, two beta, and two delta chains. [8Fe-7S] cluster is required as a cofactor. It depends on [7Fe-V-9S-C-homocitryl] cluster as a cofactor.

The catalysed reaction is N2 + 8 reduced [2Fe-2S]-[ferredoxin] + 16 ATP + 16 H2O = H2 + 8 oxidized [2Fe-2S]-[ferredoxin] + 2 NH4(+) + 16 ADP + 16 phosphate + 6 H(+). Functionally, this vanadium-iron protein is part of the nitrogenase complex that catalyzes the key enzymatic reactions in nitrogen fixation. This is Nitrogenase vanadium-iron protein alpha chain (vnfD) from Azotobacter chroococcum mcd 1.